Consider the following 153-residue polypeptide: Putative trans-acting regulator pXO2-62/BXB0076/GBAA_pXO2_0076 (153 aa).

The protein belongs to the AtxA/AcpA family.

This chain is Putative trans-acting regulator pXO2-62/BXB0076/GBAA_pXO2_0076, found in Bacillus anthracis.